The sequence spans 364 residues: tRNA 2-selenouridine synthase (364 aa).

The Rhodanese domain maps to 14–137 (LIADTPIIDV…LRQTAIQATI (124 aa)). Residue C97 is the S-selanylcysteine intermediate of the active site.

This sequence belongs to the SelU family. Monomer.

The catalysed reaction is 5-methylaminomethyl-2-thiouridine(34) in tRNA + selenophosphate + (2E)-geranyl diphosphate + H2O + H(+) = 5-methylaminomethyl-2-selenouridine(34) in tRNA + (2E)-thiogeraniol + phosphate + diphosphate. It catalyses the reaction 5-methylaminomethyl-2-thiouridine(34) in tRNA + (2E)-geranyl diphosphate = 5-methylaminomethyl-S-(2E)-geranyl-thiouridine(34) in tRNA + diphosphate. The enzyme catalyses 5-methylaminomethyl-S-(2E)-geranyl-thiouridine(34) in tRNA + selenophosphate + H(+) = 5-methylaminomethyl-2-(Se-phospho)selenouridine(34) in tRNA + (2E)-thiogeraniol. It carries out the reaction 5-methylaminomethyl-2-(Se-phospho)selenouridine(34) in tRNA + H2O = 5-methylaminomethyl-2-selenouridine(34) in tRNA + phosphate. Its function is as follows. Involved in the post-transcriptional modification of the uridine at the wobble position (U34) of tRNA(Lys), tRNA(Glu) and tRNA(Gln). Catalyzes the conversion of 2-thiouridine (S2U-RNA) to 2-selenouridine (Se2U-RNA). Acts in a two-step process involving geranylation of 2-thiouridine (S2U) to S-geranyl-2-thiouridine (geS2U) and subsequent selenation of the latter derivative to 2-selenouridine (Se2U) in the tRNA chain. The protein is tRNA 2-selenouridine synthase of Escherichia coli O17:K52:H18 (strain UMN026 / ExPEC).